We begin with the raw amino-acid sequence, 358 residues long: Probable D-xylulose reductase A (358 aa).

Zn(2+) contacts are provided by Cys47, His72, and Glu73. Residue 182 to 187 (GAGPVG) coordinates NAD(+).

This sequence belongs to the zinc-containing alcohol dehydrogenase family. Zn(2+) is required as a cofactor.

It catalyses the reaction xylitol + NAD(+) = D-xylulose + NADH + H(+). It functions in the pathway carbohydrate degradation; L-arabinose degradation via L-arabinitol; D-xylulose 5-phosphate from L-arabinose (fungal route): step 4/5. Its function is as follows. Xylitol dehydrogenase which catalyzes the conversion of xylitol to D-xylulose. Xylose is a major component of hemicelluloses such as xylan. Most fungi utilize D-xylose via three enzymatic reactions, xylose reductase (XR), xylitol dehydrogenase (XDH), and xylulokinase, to form xylulose 5-phosphate, which enters pentose phosphate pathway. The chain is Probable D-xylulose reductase A (xdhA) from Aspergillus clavatus (strain ATCC 1007 / CBS 513.65 / DSM 816 / NCTC 3887 / NRRL 1 / QM 1276 / 107).